We begin with the raw amino-acid sequence, 149 residues long: Putative pre-16S rRNA nuclease (149 aa).

This sequence belongs to the YqgF nuclease family.

The protein localises to the cytoplasm. In terms of biological role, could be a nuclease involved in processing of the 5'-end of pre-16S rRNA. This is Putative pre-16S rRNA nuclease from Pseudoalteromonas translucida (strain TAC 125).